The following is a 299-amino-acid chain: Phosphoribosylaminoimidazole-succinocarboxamide synthase (299 aa).

Belongs to the SAICAR synthetase family.

It carries out the reaction 5-amino-1-(5-phospho-D-ribosyl)imidazole-4-carboxylate + L-aspartate + ATP = (2S)-2-[5-amino-1-(5-phospho-beta-D-ribosyl)imidazole-4-carboxamido]succinate + ADP + phosphate + 2 H(+). Its pathway is purine metabolism; IMP biosynthesis via de novo pathway; 5-amino-1-(5-phospho-D-ribosyl)imidazole-4-carboxamide from 5-amino-1-(5-phospho-D-ribosyl)imidazole-4-carboxylate: step 1/2. The protein is Phosphoribosylaminoimidazole-succinocarboxamide synthase (ade7) of Schizosaccharomyces pombe (strain 972 / ATCC 24843) (Fission yeast).